Consider the following 125-residue polypeptide: Protein ApaG (125 aa).

Residues 1–125 (MINSPRVCIQ…FRLAVPTLIH (125 aa)) form the ApaG domain.

This is Protein ApaG from Citrobacter koseri (strain ATCC BAA-895 / CDC 4225-83 / SGSC4696).